Here is a 354-residue protein sequence, read N- to C-terminus: Petrobactin import system permease protein FatC (354 aa).

Helical transmembrane passes span 37–57 (YWIV…GLLV), 77–97 (IVAI…TVAF), 116–136 (LYSA…LINF), 141–161 (SFLF…GWLL), 168–188 (LQLM…VSTF), 214–234 (PAYF…IFAH), 259–279 (VIYT…LIGP), 302–322 (YIFP…YFLM), and 329–349 (QGVV…TIVL).

It belongs to the binding-protein-dependent transport system permease family. FecCD subfamily. As to quaternary structure, the complex is composed of two ATP-binding proteins (FatE), two transmembrane proteins (FatC and FatD) and a solute-binding protein (FpuA).

The protein resides in the cell membrane. Its function is as follows. Part of an ABC transporter complex involved in ferric-petrobactin uptake. Probably responsible for the translocation of the substrate across the membrane. The polypeptide is Petrobactin import system permease protein FatC (Bacillus anthracis).